The primary structure comprises 61 residues: Metallothionein-2 (61 aa).

Met-1 bears the N-acetylmethionine mark. Residues Met-1–Cys-29 are beta. 18 residues coordinate a divalent metal cation: Cys-5, Cys-7, Cys-13, Cys-15, Cys-19, Cys-21, Cys-24, Cys-26, Cys-29, Cys-33, Cys-34, Cys-36, Cys-37, Cys-41, Cys-44, Cys-48, Cys-50, and Cys-57. An alpha region spans residues Lys-30 to Ala-61. Ser-58 is subject to Phosphoserine. Residues Cys-59 and Cys-60 each contribute to the a divalent metal cation site.

Belongs to the metallothionein superfamily. Type 1 family. As to quaternary structure, interacts with EOLA1.

Its function is as follows. Metallothioneins have a high content of cysteine residues that bind various heavy metals; these proteins are transcriptionally regulated by both heavy metals and glucocorticoids. The sequence is that of Metallothionein-2 (MT2A) from Canis lupus familiaris (Dog).